The chain runs to 257 residues: Protein CUSTOS (257 aa).

Positions 1–11 (MSDLESSSSSS) are enriched in low complexity. Positions 1 to 72 (MSDLESSSSS…HEQDGNELQT (72 aa)) are disordered. The span at 32-41 (QRPRGPEKPG) shows a compositional bias: basic and acidic residues. Serine 55 carries the phosphoserine modification. At threonine 73 the chain carries Phosphothreonine. 2 disordered regions span residues 120-157 (FTSIPGGPEKEAAPQPCRKRLPSSSSSDDGDEELRRCR) and 170-257 (SAIH…VPSN). 2 stretches are compositionally biased toward basic residues: residues 180–190 (KKKKRKLKKKA) and 227–237 (TKKKKRKKKTK). A Nucleolar localization signal (NLS) motif is present at residues 228 to 236 (KKKKRKKKT).

The protein belongs to the CUSTOS family.

It localises to the nucleus envelope. Its function is as follows. Plays a role in the regulation of Wnt signaling pathway during early development. This Bos taurus (Bovine) protein is Protein CUSTOS.